The primary structure comprises 334 residues: Proline-serine-threonine phosphatase-interacting protein 2 (334 aa).

Positions 4–264 (SLFKGNFWSA…SLEMCSIQRD (261 aa)) constitute an F-BAR domain. Residues 66–166 (GQSEINTLKR…AVSRSANLVN (101 aa)) adopt a coiled-coil conformation. Positions 295–322 (VPAGKATGPNLARRGPLPIPKSSPDDPN) are disordered. Phosphotyrosine occurs at positions 323 and 329.

In terms of processing, phosphorylated on tyrosine.

The protein localises to the cytoplasm. Its subcellular location is the membrane. In terms of biological role, binds to F-actin. May be involved in regulation of the actin cytoskeleton. The polypeptide is Proline-serine-threonine phosphatase-interacting protein 2 (PSTPIP2) (Homo sapiens (Human)).